A 309-amino-acid polypeptide reads, in one-letter code: UDP-3-O-acyl-N-acetylglucosamine deacetylase (309 aa).

Residues His78, His235, and Asp239 each coordinate Zn(2+). The active-site Proton donor is His262.

This sequence belongs to the LpxC family. Zn(2+) is required as a cofactor.

The catalysed reaction is a UDP-3-O-[(3R)-3-hydroxyacyl]-N-acetyl-alpha-D-glucosamine + H2O = a UDP-3-O-[(3R)-3-hydroxyacyl]-alpha-D-glucosamine + acetate. It functions in the pathway glycolipid biosynthesis; lipid IV(A) biosynthesis; lipid IV(A) from (3R)-3-hydroxytetradecanoyl-[acyl-carrier-protein] and UDP-N-acetyl-alpha-D-glucosamine: step 2/6. Catalyzes the hydrolysis of UDP-3-O-myristoyl-N-acetylglucosamine to form UDP-3-O-myristoylglucosamine and acetate, the committed step in lipid A biosynthesis. The polypeptide is UDP-3-O-acyl-N-acetylglucosamine deacetylase (Syntrophotalea carbinolica (strain DSM 2380 / NBRC 103641 / GraBd1) (Pelobacter carbinolicus)).